A 174-amino-acid polypeptide reads, in one-letter code: ATP synthase subunit b (174 aa).

Residues 15–33 (NPGLVIWTLVTFSVVVFVL) traverse the membrane as a helical segment.

Belongs to the ATPase B chain family. As to quaternary structure, F-type ATPases have 2 components, F(1) - the catalytic core - and F(0) - the membrane proton channel. F(1) has five subunits: alpha(3), beta(3), gamma(1), delta(1), epsilon(1). F(0) has three main subunits: a(1), b(2) and c(10-14). The alpha and beta chains form an alternating ring which encloses part of the gamma chain. F(1) is attached to F(0) by a central stalk formed by the gamma and epsilon chains, while a peripheral stalk is formed by the delta and b chains.

The protein localises to the cell inner membrane. Functionally, f(1)F(0) ATP synthase produces ATP from ADP in the presence of a proton or sodium gradient. F-type ATPases consist of two structural domains, F(1) containing the extramembraneous catalytic core and F(0) containing the membrane proton channel, linked together by a central stalk and a peripheral stalk. During catalysis, ATP synthesis in the catalytic domain of F(1) is coupled via a rotary mechanism of the central stalk subunits to proton translocation. Its function is as follows. Component of the F(0) channel, it forms part of the peripheral stalk, linking F(1) to F(0). This chain is ATP synthase subunit b, found in Leptospira biflexa serovar Patoc (strain Patoc 1 / Ames).